Consider the following 331-residue polypeptide: MASLKNKHFMIGLTLTFIVALFSFLAAKLPILDKVGALTIAILIAILYRHFRGYPEQYSSGITFSSKYLLRFAIILYGLKLNIFDIIGQGSRLLAIDVGVVIFSIVMMLFVNKLLHGDKNIALLLGVGTGVCGAAAIAAVAPIFKSREKDTAISIGIIALIGTIFSLIYTAIYAIFSMTTNVYGAWSGVSLHEIAHVVLAGGFGGSDALKIALLGKLGRVFLLIPLTIVLILIMRFRSSESSSNGRISIPYFLIGFVIMALVNTYVTIPSALLNILNTVSTICLLMAMVALGLNVAFKDLKNRALKPLMTIIITSICLSSLAFIVVHWLYS.

11 helical membrane-spanning segments follow: residues 9-26 (FMIG…SFLA), 31-48 (ILDK…AILY), 69-88 (LLRF…DIIG), 93-115 (LLAI…NKLL), 122-144 (ALLL…APIF), 154-176 (SIGI…YAIF), 183-202 (YGAW…LAGG), 217-234 (LGRV…ILIM), 247-269 (ISIP…VTIP), 273-295 (LNIL…GLNV), and 308-330 (LMTI…HWLY).

Belongs to the UPF0324 family.

The protein resides in the cell membrane. The chain is UPF0324 membrane protein SAS0317 from Staphylococcus aureus (strain MSSA476).